The sequence spans 362 residues: UDP-N-acetylglucosamine--N-acetylmuramyl-(pentapeptide) pyrophosphoryl-undecaprenol N-acetylglucosamine transferase (362 aa).

Residues 10-12 (TGG), Asn-124, Ser-194, Ile-249, and Gln-294 contribute to the UDP-N-acetyl-alpha-D-glucosamine site.

It belongs to the glycosyltransferase 28 family. MurG subfamily.

The protein resides in the cell membrane. It catalyses the reaction Mur2Ac(oyl-L-Ala-gamma-D-Glu-L-Lys-D-Ala-D-Ala)-di-trans,octa-cis-undecaprenyl diphosphate + UDP-N-acetyl-alpha-D-glucosamine = beta-D-GlcNAc-(1-&gt;4)-Mur2Ac(oyl-L-Ala-gamma-D-Glu-L-Lys-D-Ala-D-Ala)-di-trans,octa-cis-undecaprenyl diphosphate + UDP + H(+). Its pathway is cell wall biogenesis; peptidoglycan biosynthesis. In terms of biological role, cell wall formation. Catalyzes the transfer of a GlcNAc subunit on undecaprenyl-pyrophosphoryl-MurNAc-pentapeptide (lipid intermediate I) to form undecaprenyl-pyrophosphoryl-MurNAc-(pentapeptide)GlcNAc (lipid intermediate II). The chain is UDP-N-acetylglucosamine--N-acetylmuramyl-(pentapeptide) pyrophosphoryl-undecaprenol N-acetylglucosamine transferase from Pediococcus pentosaceus (strain ATCC 25745 / CCUG 21536 / LMG 10740 / 183-1w).